Consider the following 124-residue polypeptide: Small ribosomal subunit protein uS12 (124 aa).

At Asp-89 the chain carries 3-methylthioaspartic acid. Positions 104–124 (LQGVKDRKQSRSKYGAKRPKK) are disordered. The span at 113–124 (SRSKYGAKRPKK) shows a compositional bias: basic residues.

It belongs to the universal ribosomal protein uS12 family. In terms of assembly, part of the 30S ribosomal subunit. Contacts proteins S8 and S17. May interact with IF1 in the 30S initiation complex.

Functionally, with S4 and S5 plays an important role in translational accuracy. Interacts with and stabilizes bases of the 16S rRNA that are involved in tRNA selection in the A site and with the mRNA backbone. Located at the interface of the 30S and 50S subunits, it traverses the body of the 30S subunit contacting proteins on the other side and probably holding the rRNA structure together. The combined cluster of proteins S8, S12 and S17 appears to hold together the shoulder and platform of the 30S subunit. The protein is Small ribosomal subunit protein uS12 of Thiomonas delicata (Thiomonas cuprina).